Reading from the N-terminus, the 225-residue chain is Transcription factor HES-7 (225 aa).

The bHLH domain maps to 12–69 (GPKMLKPLVEKRRRDRINRSLEELRLLLLERTRDQNLRNPKLEKAEILEFAVGYLRER). The Orange domain maps to 92-122 (YLSGFRECLLRLAAFAHDASPAARAQLFSAL). Positions 125-225 (YLRPKPPRPK…PPPAFWRPWP (101 aa)) are disordered. Residues 147 to 158 (LDPAAPALGPAL) are compositionally biased toward low complexity. Pro residues predominate over residues 212 to 225 (APLPPPPAFWRPWP). The WRPW motif motif lies at 221 to 224 (WRPW).

Transcription repression requires formation of a complex with a corepressor protein of the Groucho/TLE family.

The protein localises to the nucleus. Its function is as follows. Transcriptional repressor. Represses transcription from both N box- and E box-containing promoters. May with HES1, cooperatively regulate somite formation in the presomitic mesoderm (PSM). May function as a segmentation clock, which is essential for coordinated somite segmentation. The sequence is that of Transcription factor HES-7 (HES7) from Homo sapiens (Human).